Consider the following 271-residue polypeptide: Glutamate racemase 3 (271 aa).

Substrate is bound by residues 15–16 and 47–48; these read DS and YG. Catalysis depends on C78, which acts as the Proton donor/acceptor. 79-80 serves as a coordination point for substrate; the sequence is NT. The active-site Proton donor/acceptor is the C185. Substrate is bound at residue 186–187; the sequence is TH.

It belongs to the aspartate/glutamate racemases family.

The enzyme catalyses L-glutamate = D-glutamate. Its pathway is cell wall biogenesis; peptidoglycan biosynthesis. In terms of biological role, provides the (R)-glutamate required for cell wall biosynthesis. The chain is Glutamate racemase 3 from Caldanaerobacter subterraneus subsp. tengcongensis (strain DSM 15242 / JCM 11007 / NBRC 100824 / MB4) (Thermoanaerobacter tengcongensis).